Consider the following 371-residue polypeptide: Cytochrome b (371 aa).

Helical transmembrane passes span 25-45, 69-90, 105-125, and 170-190; these read FGSMLLTCLALQVLTGFFLAV, WMMQNLHAIGASMFFICIYIHI, WMSGITLLITLMATAFFGYVL, and FFALHFILPFAIISLSSLHVI. Residues H75 and H89 each coordinate heme b. Heme b contacts are provided by H174 and H188. A ubiquinone is bound at residue H193. 4 helical membrane-spanning segments follow: residues 218–238, 280–300, 312–332, and 339–358; these read YKDFLLLTLMVLSLFIIVSFF, LGGALALVMSIMILFTIPFTH, LYQLMFWTLVSTFITITWAAT, and FITISQVTSTLYFTFFISIP.

It belongs to the cytochrome b family. As to quaternary structure, the cytochrome bc1 complex contains 3 respiratory subunits (MT-CYB, CYC1 and UQCRFS1), 2 core proteins (UQCRC1 and UQCRC2) and probably 6 low-molecular weight proteins. Requires heme b as cofactor.

Its subcellular location is the mitochondrion inner membrane. Its function is as follows. Component of the ubiquinol-cytochrome c reductase complex (complex III or cytochrome b-c1 complex) that is part of the mitochondrial respiratory chain. The b-c1 complex mediates electron transfer from ubiquinol to cytochrome c. Contributes to the generation of a proton gradient across the mitochondrial membrane that is then used for ATP synthesis. In Malayopython reticulatus (Reticulate python), this protein is Cytochrome b (MT-CYB).